Here is a 457-residue protein sequence, read N- to C-terminus: D-xylose transporter (457 aa).

10 consecutive transmembrane segments (helical) span residues 14–34 (ALGGLLFGYDTGVISGAILFI), 46–66 (GWVVSAVLLGAILGAAIIGPS), 81–101 (IIFFVGALGSAFSPEFWTLII), 104–124 (IILGMAVGAASALIPTYLAEL), 131–151 (GTVSSLFQLMVMTGILLAYIT), 164–184 (WMLGFAAIPAALLFLGGLILP), 244–264 (LIIGIGLAIFQQVMGCNTVLY), 281–301 (LLAHIGIGIFNVIVTAIAVAI), 309–329 (KIVNIGAVGMGISLFVMSIGM), and 338–358 (AAIISVIALTVYIAFFSATWG). Glutamine 138 is a binding site for beta-D-xylose. Beta-D-xylose-binding positions include 254–255 (QQ) and asparagine 260. Beta-D-xylose-binding residues include tryptophan 362 and asparagine 385. Transmembrane regions (helical) follow at residues 380-400 (FASVINWTANMIVSLTFPSLL) and 402-422 (FFGTGSLFIGYGILCFASIWF).

The protein belongs to the major facilitator superfamily. Sugar transporter (TC 2.A.1.1) family.

Its subcellular location is the cell membrane. Its activity is regulated as follows. Transport is inhibited by 6-deoxy-D-glucose. In terms of biological role, uptake of D-xylose across the boundary membrane with the concomitant transport of protons into the cell (symport system). Transport is driven by the proton motive force generated by either malolactic fermentation or by the metabolism of D-glucose. In Levilactobacillus brevis (Lactobacillus brevis), this protein is D-xylose transporter.